The primary structure comprises 670 residues: Mannosyl-oligosaccharide alpha-1,2-mannosidase IA (670 aa).

Residues 1-30 (MTGILPTYQRFVNGVPVPSISRRSFRLREK) are Cytoplasmic-facing. The chain crosses the membrane as a helical; Signal-anchor for type II membrane protein span at residues 31-51 (YLIVSVLLTFGIVWLGALFYL). The Lumenal portion of the chain corresponds to 52–670 (PEFKSSNSVN…EPAHAQNNRI (619 aa)). Residue Asn-61 is glycosylated (N-linked (GlcNAc...) asparagine). The interval 135–177 (DVAPSVSSSRGPSKPPVDAIEEPAVGNNAANKDVSPSGPKAES) is disordered. Cys-480 and Cys-512 form a disulfide bridge. The active-site Proton donor is Glu-526. Thr-637 is a Ca(2+) binding site.

It belongs to the glycosyl hydrolase 47 family. Ca(2+) serves as cofactor. In terms of processing, N-glycosylated. Contains high mannose-type oligosaccharides.

The protein resides in the golgi apparatus membrane. It catalyses the reaction N(4)-(alpha-D-Man-(1-&gt;2)-alpha-D-Man-(1-&gt;2)-alpha-D-Man-(1-&gt;3)-[alpha-D-Man-(1-&gt;2)-alpha-D-Man-(1-&gt;3)-[alpha-D-Man-(1-&gt;2)-alpha-D-Man-(1-&gt;6)]-alpha-D-Man-(1-&gt;6)]-beta-D-Man-(1-&gt;4)-beta-D-GlcNAc-(1-&gt;4)-beta-D-GlcNAc)-L-asparaginyl-[protein] (N-glucan mannose isomer 9A1,2,3B1,2,3) + 4 H2O = N(4)-(alpha-D-Man-(1-&gt;3)-[alpha-D-Man-(1-&gt;3)-[alpha-D-Man-(1-&gt;6)]-alpha-D-Man-(1-&gt;6)]-beta-D-Man-(1-&gt;4)-beta-D-GlcNAc-(1-&gt;4)-beta-D-GlcNAc)-L-asparaginyl-[protein] (N-glucan mannose isomer 5A1,2) + 4 beta-D-mannose. The enzyme catalyses N(4)-(alpha-D-Man-(1-&gt;2)-alpha-D-Man-(1-&gt;2)-alpha-D-Man-(1-&gt;3)-[alpha-D-Man-(1-&gt;3)-[alpha-D-Man-(1-&gt;2)-alpha-D-Man-(1-&gt;6)]-alpha-D-Man-(1-&gt;6)]-beta-D-Man-(1-&gt;4)-beta-D-GlcNAc-(1-&gt;4)-beta-D-GlcNAc)-L-asparaginyl-[protein] (N-glucan mannose isomer 8A1,2,3B1,3) + 3 H2O = N(4)-(alpha-D-Man-(1-&gt;3)-[alpha-D-Man-(1-&gt;3)-[alpha-D-Man-(1-&gt;6)]-alpha-D-Man-(1-&gt;6)]-beta-D-Man-(1-&gt;4)-beta-D-GlcNAc-(1-&gt;4)-beta-D-GlcNAc)-L-asparaginyl-[protein] (N-glucan mannose isomer 5A1,2) + 3 beta-D-mannose. Its pathway is protein modification; protein glycosylation. Its activity is regulated as follows. Strongly inhibited by 1-deoxymannojirimycin, an inhibitor of class I alpha-mannosidases, and by EDTA. EDTA inhibition is reversed by the addition of calcium, but not of magnesium. In terms of biological role, involved in the maturation of Asn-linked oligosaccharides. Converts Man(9)GlcNAc(2) to Man(5)GlcNAc(2) primarily through the Man(7)GlcNAc(2) isomer C processing intermediate. This chain is Mannosyl-oligosaccharide alpha-1,2-mannosidase IA, found in Spodoptera frugiperda (Fall armyworm).